A 98-amino-acid polypeptide reads, in one-letter code: Integration host factor subunit beta (98 aa).

Belongs to the bacterial histone-like protein family. In terms of assembly, heterodimer of an alpha and a beta chain.

This protein is one of the two subunits of integration host factor, a specific DNA-binding protein that functions in genetic recombination as well as in transcriptional and translational control. This Pseudomonas syringae pv. tomato (strain ATCC BAA-871 / DC3000) protein is Integration host factor subunit beta.